A 345-amino-acid chain; its full sequence is N-acetyl-gamma-glutamyl-phosphate reductase (345 aa).

Residue C149 is part of the active site.

This sequence belongs to the NAGSA dehydrogenase family. Type 1 subfamily.

It localises to the cytoplasm. The catalysed reaction is N-acetyl-L-glutamate 5-semialdehyde + phosphate + NADP(+) = N-acetyl-L-glutamyl 5-phosphate + NADPH + H(+). It functions in the pathway amino-acid biosynthesis; L-arginine biosynthesis; N(2)-acetyl-L-ornithine from L-glutamate: step 3/4. Its function is as follows. Catalyzes the NADPH-dependent reduction of N-acetyl-5-glutamyl phosphate to yield N-acetyl-L-glutamate 5-semialdehyde. The sequence is that of N-acetyl-gamma-glutamyl-phosphate reductase from Bacillus cereus (strain ATCC 10987 / NRS 248).